We begin with the raw amino-acid sequence, 319 residues long: Acetyl-coenzyme A carboxylase carboxyl transferase subunit alpha (319 aa).

Residues R39–E293 enclose the CoA carboxyltransferase C-terminal domain.

Belongs to the AccA family. In terms of assembly, acetyl-CoA carboxylase is a heterohexamer composed of biotin carboxyl carrier protein (AccB), biotin carboxylase (AccC) and two subunits each of ACCase subunit alpha (AccA) and ACCase subunit beta (AccD).

The protein localises to the cytoplasm. It catalyses the reaction N(6)-carboxybiotinyl-L-lysyl-[protein] + acetyl-CoA = N(6)-biotinyl-L-lysyl-[protein] + malonyl-CoA. It functions in the pathway lipid metabolism; malonyl-CoA biosynthesis; malonyl-CoA from acetyl-CoA: step 1/1. Component of the acetyl coenzyme A carboxylase (ACC) complex. First, biotin carboxylase catalyzes the carboxylation of biotin on its carrier protein (BCCP) and then the CO(2) group is transferred by the carboxyltransferase to acetyl-CoA to form malonyl-CoA. This is Acetyl-coenzyme A carboxylase carboxyl transferase subunit alpha from Neisseria meningitidis serogroup B (strain ATCC BAA-335 / MC58).